We begin with the raw amino-acid sequence, 239 residues long: Large ribosomal subunit protein uL2 (239 aa).

Disordered regions lie at residues 1-20 and 203-239; these read MGKS…FRSP and PFGG…GRRK. Basic residues predominate over residues 222–239; the sequence is PPGRKVGHIAARRTGRRK.

Belongs to the universal ribosomal protein uL2 family. In terms of assembly, part of the 50S ribosomal subunit. Forms a bridge to the 30S subunit in the 70S ribosome.

One of the primary rRNA binding proteins. Required for association of the 30S and 50S subunits to form the 70S ribosome, for tRNA binding and peptide bond formation. It has been suggested to have peptidyltransferase activity; this is somewhat controversial. Makes several contacts with the 16S rRNA in the 70S ribosome. The protein is Large ribosomal subunit protein uL2 of Pyrococcus horikoshii (strain ATCC 700860 / DSM 12428 / JCM 9974 / NBRC 100139 / OT-3).